We begin with the raw amino-acid sequence, 185 residues long: NADH-ubiquinone oxidoreductase chain 6 (185 aa).

A run of 5 helical transmembrane segments spans residues 3–23 (SLFM…ISTP), 28–48 (SVFW…SLGL), 54–74 (IFII…IMLI), 87–107 (HFLP…TNSP), and 134–154 (ELVL…ILLA).

Belongs to the complex I subunit 6 family.

The protein resides in the mitochondrion membrane. It carries out the reaction a ubiquinone + NADH + 5 H(+)(in) = a ubiquinol + NAD(+) + 4 H(+)(out). Its function is as follows. Core subunit of the mitochondrial membrane respiratory chain NADH dehydrogenase (Complex I) that is believed to belong to the minimal assembly required for catalysis. Complex I functions in the transfer of electrons from NADH to the respiratory chain. The immediate electron acceptor for the enzyme is believed to be ubiquinone. The sequence is that of NADH-ubiquinone oxidoreductase chain 6 (ND6) from Sarcophyton glaucum (Toadstool umbrella leather coral).